The primary structure comprises 215 residues: Large ribosomal subunit protein bL25 (215 aa).

Residues Glu192–Glu203 are compositionally biased toward acidic residues. Positions Glu192–Glu215 are disordered. A compositionally biased stretch (basic and acidic residues) spans Glu205–Glu215.

Belongs to the bacterial ribosomal protein bL25 family. CTC subfamily. As to quaternary structure, part of the 50S ribosomal subunit; part of the 5S rRNA/L5/L18/L25 subcomplex. Contacts the 5S rRNA. Binds to the 5S rRNA independently of L5 and L18.

In terms of biological role, this is one of the proteins that binds to the 5S RNA in the ribosome where it forms part of the central protuberance. This Thermotoga sp. (strain RQ2) protein is Large ribosomal subunit protein bL25.